We begin with the raw amino-acid sequence, 434 residues long: MTTQVVNVIGAGLAGSEAAYQIAKRGVQVRLYEMRPVRQTPAHHTDKFAELVCSNSLRANTLTNAVGVIKEEMRLMDSVIIRAADECSVPAGGALAVDRHEFAAKVTEYVKNHPNVTVMNEEITDIPEGPTIIATGPLTSPDLSAKLKELTGEDYFYFYDAAAPIVEKDSIDMNKVYLKSRYDKGEAAYLNCPMTEEEFDRFYEALIAAETVPLKEFEKEIFFEGCMPVEVMASRGRQTLVFGPMKPVGLEDPKTGKTPYAVVQLRQDDAAGTLYNIVGFQTHLKWGPQKEVLQLIPGLENAEIVRYGVMHRNTFINSPNLLRPTYQYKQRDDLFFAGQMTGVEGYVESAASGLLAGINAARLVQGEEPVVLPPVTAMGSMANYITATNAKNFQPMNANFGLFAPLEKKIKKKVERNEAYAARALETIRNFVNI.

10-15 (GAGLAG) contributes to the FAD binding site.

It belongs to the MnmG family. TrmFO subfamily. FAD is required as a cofactor.

Its subcellular location is the cytoplasm. The catalysed reaction is uridine(54) in tRNA + (6R)-5,10-methylene-5,6,7,8-tetrahydrofolate + NADH + H(+) = 5-methyluridine(54) in tRNA + (6S)-5,6,7,8-tetrahydrofolate + NAD(+). It carries out the reaction uridine(54) in tRNA + (6R)-5,10-methylene-5,6,7,8-tetrahydrofolate + NADPH + H(+) = 5-methyluridine(54) in tRNA + (6S)-5,6,7,8-tetrahydrofolate + NADP(+). Functionally, catalyzes the folate-dependent formation of 5-methyl-uridine at position 54 (M-5-U54) in all tRNAs. The polypeptide is Methylenetetrahydrofolate--tRNA-(uracil-5-)-methyltransferase TrmFO (Bacillus cereus (strain ATCC 14579 / DSM 31 / CCUG 7414 / JCM 2152 / NBRC 15305 / NCIMB 9373 / NCTC 2599 / NRRL B-3711)).